The following is a 213-amino-acid chain: MGVELRSYVYLDNLQRQHASYIGTVATGFLTLPGDASVWIEISPGIEINRMMDIALKAAVVRPGVQFIERLYGLMEVHASNQGEVREAGRAVLSALGLTERDRLKPKIVSSQIIRNIDAHQAQLINRQRRGQMLLAGETLYVLEVQPAAYAALAANEAEKAALINILQVSAIGSFGRLFLGGEERDIIAGSRAAVAALENLSGREHPGDRSRE.

BMC circularly permuted domains are found at residues 4-106 (ELRS…RLKP) and 107-211 (KIVS…GDRS). The Probably important for pore gating signature appears at 69–70 (ER).

This sequence belongs to the EutL/PduB family. A dimer of stacked trimers, the same faces interact.

It is found in the carboxysome. Its function is as follows. Probably part of the carboxysome shell, a polyhedral inclusion where RuBisCO (ribulose bisphosphate carboxylase, rbcL-rbcS) is sequestered. It is thought that this protein controls transport of RuBisCO reactants in and out of the carboxysome; residual densities in the 4 X-ray structures suggest that differing compounds bind in interior pockets, depending on the open or closed state of the pore. The sequence is that of Carboxysome shell protein CcmP from Synechococcus elongatus (strain ATCC 33912 / PCC 7942 / FACHB-805) (Anacystis nidulans R2).